Reading from the N-terminus, the 1381-residue chain is Hepatocyte growth factor receptor (1381 aa).

An N-terminal signal peptide occupies residues methionine 1–glycine 24. Residues glutamate 25–threonine 933 lie on the Extracellular side of the membrane. The region spanning arginine 27–leucine 516 is the Sema domain. 3 N-linked (GlcNAc...) asparagine glycosylation sites follow: asparagine 45, asparagine 100, and asparagine 106. Cystine bridges form between cysteine 95/cysteine 101, cysteine 98/cysteine 160, cysteine 133/cysteine 141, and cysteine 173/cysteine 176. N-linked (GlcNAc...) asparagine glycosylation is found at asparagine 203 and asparagine 359. 2 disulfide bridges follow: cysteine 299–cysteine 364 and cysteine 386–cysteine 398. N-linked (GlcNAc...) asparagine glycosylation is found at asparagine 400 and asparagine 406. Disulfide bonds link cysteine 521/cysteine 539, cysteine 527/cysteine 562, cysteine 530/cysteine 546, and cysteine 542/cysteine 552. The N-linked (GlcNAc...) asparagine glycan is linked to asparagine 554. 3 consecutive IPT/TIG domains span residues proline 564–valine 656, proline 658–arginine 740, and proline 743–valine 837. Threonine 583 is a glycosylation site (O-linked (Man) threonine). N-linked (GlcNAc...) asparagine glycans are attached at residues asparagine 608 and asparagine 636. 2 O-linked (Man) threonine glycosylation sites follow: threonine 677 and threonine 762. N-linked (GlcNAc...) asparagine glycans are attached at residues asparagine 786 and asparagine 880. The helical transmembrane segment at glycine 934 to leucine 956 threads the bilayer. The Cytoplasmic segment spans residues lysine 957–threonine 1381. Serine 967 carries the phosphoserine modification. Threonine 978 carries the phosphothreonine modification. Phosphoserine is present on residues serine 991, serine 998, and serine 1001. Tyrosine 1004 is subject to Phosphotyrosine. The Protein kinase domain maps to valine 1079–isoleucine 1346. Residues isoleucine 1085 to valine 1093 and lysine 1111 contribute to the ATP site. The Proton acceptor role is filled by aspartate 1205. The tract at residues leucine 1213–threonine 1381 is interaction with RANBP9. Tyrosine 1231 bears the Phosphotyrosine mark. Residues tyrosine 1235 and tyrosine 1236 each carry the phosphotyrosine; by autocatalysis modification. Position 1290 is a phosphothreonine (threonine 1290). The interaction with MUC20 stretch occupies residues tryptophan 1321–valine 1360. 2 positions are modified to phosphotyrosine; by autocatalysis: tyrosine 1350 and tyrosine 1357. Phosphotyrosine is present on tyrosine 1366.

The protein belongs to the protein kinase superfamily. Tyr protein kinase family. Heterodimer made of an alpha chain (50 kDa) and a beta chain (145 kDa) which are disulfide linked. Binds PLXNB1. Interacts when phosphorylated with downstream effectors including STAT3, PIK3R1, SRC, PCLG1, GRB2 and GAB1. Interacts with SPSB1, SPSB2 and SPSB4. Interacts with INPP5D/SHIP1. When phosphorylated at Tyr-1357, interacts with INPPL1/SHIP2. Interacts with RANBP9 and RANBP10, as well as SPSB1, SPSB2, SPSB3 and SPSB4. SPSB1 binding occurs in the presence and in the absence of HGF, however HGF treatment has a positive effect on this interaction. Interacts with MUC20; prevents interaction with GRB2 and suppresses hepatocyte growth factor-induced cell proliferation. Interacts with GRB10. Interacts with PTPN1 and PTPN2. Interacts with HSP90AA1 and HSP90AB1; the interaction suppresses MET kinase activity. Interacts with tensin TNS3. Interacts (when phosphorylated) with tensin TNS4 (via SH2 domain); the interaction increases MET protein stability by inhibiting MET endocytosis and subsequent lysosomal degradation. Autophosphorylated in response to ligand binding on Tyr-1235 and Tyr-1236 in the kinase domain leading to further phosphorylation of Tyr-1350 and Tyr-1357 in the C-terminal multifunctional docking site. Dephosphorylated by PTPRJ at Tyr-1350 and Tyr-1366. Dephosphorylated by PTPN1 and PTPN2. Post-translationally, ubiquitinated. Ubiquitination by CBL regulates the receptor stability and activity through proteasomal degradation. In terms of processing, O-mannosylation of IPT/TIG domains by TMEM260 is required for protein maturation. O-mannosylated residues are composed of single mannose glycans that are not elongated or modified.

The protein resides in the membrane. It carries out the reaction L-tyrosyl-[protein] + ATP = O-phospho-L-tyrosyl-[protein] + ADP + H(+). Its activity is regulated as follows. In its inactive state, the C-terminal tail interacts with the catalytic domain and inhibits the kinase activity. Upon ligand binding, the C-terminal tail is displaced and becomes phosphorylated, thus increasing the kinase activity. Its function is as follows. Receptor tyrosine kinase that transduces signals from the extracellular matrix into the cytoplasm by binding to hepatocyte growth factor/HGF ligand. Regulates many physiological processes including proliferation, scattering, morphogenesis and survival. Ligand binding at the cell surface induces autophosphorylation of MET on its intracellular domain that provides docking sites for downstream signaling molecules. Following activation by ligand, interacts with the PI3-kinase subunit PIK3R1, PLCG1, SRC, GRB2, STAT3 or the adapter GAB1. Recruitment of these downstream effectors by MET leads to the activation of several signaling cascades including the RAS-ERK, PI3 kinase-AKT, or PLCgamma-PKC. The RAS-ERK activation is associated with the morphogenetic effects while PI3K/AKT coordinates prosurvival effects. During embryonic development, MET signaling plays a role in gastrulation, development and migration of muscles and neuronal precursors, angiogenesis and kidney formation. In adults, participates in wound healing as well as organ regeneration and tissue remodeling. Also promotes differentiation and proliferation of hematopoietic cells. This Dasypus novemcinctus (Nine-banded armadillo) protein is Hepatocyte growth factor receptor (MET).